Reading from the N-terminus, the 206-residue chain is dTTP/UTP pyrophosphatase (206 aa).

The active-site Proton acceptor is the aspartate 79.

It belongs to the Maf family. YhdE subfamily. Requires a divalent metal cation as cofactor.

The protein localises to the cytoplasm. The catalysed reaction is dTTP + H2O = dTMP + diphosphate + H(+). It carries out the reaction UTP + H2O = UMP + diphosphate + H(+). In terms of biological role, nucleoside triphosphate pyrophosphatase that hydrolyzes dTTP and UTP. May have a dual role in cell division arrest and in preventing the incorporation of modified nucleotides into cellular nucleic acids. The polypeptide is dTTP/UTP pyrophosphatase (Rhizobium etli (strain ATCC 51251 / DSM 11541 / JCM 21823 / NBRC 15573 / CFN 42)).